A 137-amino-acid polypeptide reads, in one-letter code: Large-conductance mechanosensitive channel (137 aa).

A run of 2 helical transmembrane segments spans residues 9–29 and 79–99; these read AFAVKGNVVDMAVGIIIGAAF and IQTVLDFVIVAFAIFMGVKAI.

Belongs to the MscL family. In terms of assembly, homopentamer.

Its subcellular location is the cell inner membrane. In terms of biological role, channel that opens in response to stretch forces in the membrane lipid bilayer. May participate in the regulation of osmotic pressure changes within the cell. This Pseudomonas aeruginosa (strain ATCC 15692 / DSM 22644 / CIP 104116 / JCM 14847 / LMG 12228 / 1C / PRS 101 / PAO1) protein is Large-conductance mechanosensitive channel.